A 418-amino-acid chain; its full sequence is E3 ubiquitin-protein ligase pellino homolog 1 (418 aa).

Positions 13 to 200 constitute an FHA; atypical domain; that stretch reads APVKYGELIV…MHPRNGFTED (188 aa). Position 121 is a phosphoserine (serine 121). Residue threonine 127 is modified to Phosphothreonine. The segment at 311 to 399 is ring-like domain; necessary for ubiquitination of RIPK3; that stretch reads CGHVHGYHNW…TFHAACPFCA (89 aa).

Belongs to the pellino family. As to quaternary structure, interacts with MAP3K7. Upon IL1B treatment, forms a complex with TRAF6, IRAK1, IRAK4 and MYD88; this complex recruits MAP3K7/TAK1, TAB1 and TAB2 to mediate NF-kappa-B activation. Direct binding of SMAD6 to PELI1 prevents the complex formation and hence negatively regulates IL1R-TLR signaling and eventually NF-kappa-B-mediated gene expression. Interacts (via atypical FHA domain) with RIPK3. Binds preferentially to the 'Thr-182' phosphorylated form of RIPK3. Interacts with RIPK1. Post-translationally, phosphorylation by IRAK1 and IRAK4 enhances its E3 ligase activity. Phosphorylated by ATM in response to DNA damage, promoting localization to DNA double-strand breaks (DSBs) and ability to mediate 'Lys-63'-linked ubiquitination of NBN. In terms of processing, sumoylated.

The protein localises to the chromosome. It catalyses the reaction S-ubiquitinyl-[E2 ubiquitin-conjugating enzyme]-L-cysteine + [acceptor protein]-L-lysine = [E2 ubiquitin-conjugating enzyme]-L-cysteine + N(6)-ubiquitinyl-[acceptor protein]-L-lysine.. The protein operates within protein modification; protein ubiquitination. In terms of biological role, E3 ubiquitin ligase catalyzing the covalent attachment of ubiquitin moieties onto substrate proteins. Involved in the TLR and IL-1 signaling pathways via interaction with the complex containing IRAK kinases and TRAF6. Acts as a positive regulator of inflammatory response in microglia through activation of NF-kappa-B and MAP kinase. Mediates 'Lys-63'-linked polyubiquitination of IRAK1 allowing subsequent NF-kappa-B activation. Conjugates 'Lys-63'-linked ubiquitin chains to the adapter protein ASC/PYCARD, which in turn is crucial for NLRP3 inflammasome activation. Mediates 'Lys-48'-linked polyubiquitination of RIPK3 leading to its subsequent proteasome-dependent degradation; preferentially recognizes and mediates the degradation of the 'Thr-182' phosphorylated form of RIPK3. Negatively regulates necroptosis by reducing RIPK3 expression. Mediates 'Lys-63'-linked ubiquitination of RIPK1. Following phosphorylation by ATM, catalyzes 'Lys-63'-linked ubiquitination of NBN, promoting DNA repair via homologous recombination. Negatively regulates activation of the metabolic mTORC1 signaling pathway by mediating 'Lys-63'-linked ubiquitination of mTORC1-inhibitory protein TSC1 and thereby promoting TSC1/TSC2 complex stability. This Mus musculus (Mouse) protein is E3 ubiquitin-protein ligase pellino homolog 1 (Peli1).